We begin with the raw amino-acid sequence, 203 residues long: Dephospho-CoA kinase (203 aa).

Residues 4-201 enclose the DPCK domain; sequence IIGLTGGIGS…RKYLMLARKH (198 aa). 12-17 is a binding site for ATP; sequence GSGKTR.

It belongs to the CoaE family.

The protein resides in the cytoplasm. It carries out the reaction 3'-dephospho-CoA + ATP = ADP + CoA + H(+). Its pathway is cofactor biosynthesis; coenzyme A biosynthesis; CoA from (R)-pantothenate: step 5/5. Functionally, catalyzes the phosphorylation of the 3'-hydroxyl group of dephosphocoenzyme A to form coenzyme A. The protein is Dephospho-CoA kinase of Nitrosomonas europaea (strain ATCC 19718 / CIP 103999 / KCTC 2705 / NBRC 14298).